The primary structure comprises 308 residues: MKLTFLGTGAAIPTKYRAHPSISLKFDGEIFLFDCGENTQRQIIFTDVSPMKINNIFISHLHGDHILGLPGLLQSVAFQGRTKPLNIYGPEETAKMLENILNVGYHSIDYPINVYEISSKTPEKIISTDNYEVYSFPVVHSVPALAYVFRQVKKPRMDLEKVNKLGIEIGPDLKRLKDGFSVELNGKIITLEDVTLPPKKGICVGYSGDTIPLNEFAEFLRELKCTTLIHEATFDKTMDKNAKETLHSTVHDALNIAKLSGVNTVILTHISARYDELSAFENDIVEFKAENPDLHVLIAEDLMEYSLK.

Positions 60, 62, 64, 65, 140, 209, and 269 each coordinate Zn(2+). The Proton acceptor role is filled by Asp64.

It belongs to the RNase Z family. In terms of assembly, homodimer. Zn(2+) is required as a cofactor.

It carries out the reaction Endonucleolytic cleavage of RNA, removing extra 3' nucleotides from tRNA precursor, generating 3' termini of tRNAs. A 3'-hydroxy group is left at the tRNA terminus and a 5'-phosphoryl group is left at the trailer molecule.. In terms of biological role, zinc phosphodiesterase, which displays some tRNA 3'-processing endonuclease activity. Probably involved in tRNA maturation, by removing a 3'-trailer from precursor tRNA. In Methanococcus maripaludis (strain C6 / ATCC BAA-1332), this protein is Ribonuclease Z.